Reading from the N-terminus, the 188-residue chain is Small ribosomal subunit protein uS7 (188 aa).

Belongs to the universal ribosomal protein uS7 family. Part of the 30S ribosomal subunit.

In terms of biological role, one of the primary rRNA binding proteins, it binds directly to 16S rRNA where it nucleates assembly of the head domain of the 30S subunit. Is located at the subunit interface close to the decoding center. The polypeptide is Small ribosomal subunit protein uS7 (Methanococcus aeolicus (strain ATCC BAA-1280 / DSM 17508 / OCM 812 / Nankai-3)).